Here is a 614-residue protein sequence, read N- to C-terminus: Sulfite reductase [NADPH] flavoprotein alpha-component (614 aa).

The Flavodoxin-like domain maps to 79–217; that stretch reads LTIIFASQTG…AATEWRKQVL (139 aa). FMN is bound by residues 85-90, 132-135, and 168-177; these read SQTGNA, STNG, and LGDSSYQFFC. Positions 249–463 constitute an FAD-binding FR-type domain; the sequence is EQPYTASLST…VEHNNNFKLP (215 aa). FAD is bound by residues threonine 337, threonine 371, 401–404, 419–421, tyrosine 425, and 434–437; these read RLYS, TVG, and GGAS. Residues 534–535, 540–544, and aspartate 576 each bind NADP(+); these read SR and KVYVQ. Tyrosine 614 is an FAD binding site.

This sequence belongs to the NADPH-dependent sulphite reductase flavoprotein subunit CysJ family. The protein in the N-terminal section; belongs to the flavodoxin family. In the C-terminal section; belongs to the flavoprotein pyridine nucleotide cytochrome reductase family. Alpha(8)-beta(8). The alpha component is a flavoprotein, the beta component is a hemoprotein. FAD is required as a cofactor. FMN serves as cofactor.

The enzyme catalyses hydrogen sulfide + 3 NADP(+) + 3 H2O = sulfite + 3 NADPH + 4 H(+). The protein operates within sulfur metabolism; hydrogen sulfide biosynthesis; hydrogen sulfide from sulfite (NADPH route): step 1/1. Its function is as follows. Component of the sulfite reductase complex that catalyzes the 6-electron reduction of sulfite to sulfide. This is one of several activities required for the biosynthesis of L-cysteine from sulfate. The flavoprotein component catalyzes the electron flow from NADPH -&gt; FAD -&gt; FMN to the hemoprotein component. This is Sulfite reductase [NADPH] flavoprotein alpha-component from Vibrio cholerae serotype O1 (strain ATCC 39315 / El Tor Inaba N16961).